We begin with the raw amino-acid sequence, 265 residues long: Deoxyguanosine kinase, mitochondrial (265 aa).

32-40 (GNIAVGKST) lines the ATP pocket. Positions 57, 88, 99, and 106 each coordinate substrate. The Proton acceptor role is filled by Glu129. Substrate contacts are provided by Arg130 and Asp135. 190-194 (RLQRR) is an ATP binding site. Glu199 provides a ligand contact to substrate. 242 to 244 (EDF) lines the ATP pocket.

It belongs to the DCK/DGK family. As to quaternary structure, homodimer.

It is found in the mitochondrion. It catalyses the reaction 2'-deoxyguanosine + ATP = dGMP + ADP + H(+). Functionally, phosphorylates deoxyguanosine in the mitochondrial matrix with high efficiency but shows very low activity against other deoxynucleosides. The polypeptide is Deoxyguanosine kinase, mitochondrial (Xenopus laevis (African clawed frog)).